The following is a 548-amino-acid chain: Probable malate:quinone oxidoreductase (548 aa).

Belongs to the MQO family. Requires FAD as cofactor.

The enzyme catalyses (S)-malate + a quinone = a quinol + oxaloacetate. It functions in the pathway carbohydrate metabolism; tricarboxylic acid cycle; oxaloacetate from (S)-malate (quinone route): step 1/1. The sequence is that of Probable malate:quinone oxidoreductase from Escherichia coli O6:K15:H31 (strain 536 / UPEC).